The primary structure comprises 667 residues: Protein MAIN-LIKE 2 (667 aa).

Residue Met-1 is modified to N-acetylmethionine. Positions 492–508 (MRGKERVRRKGMGKRRK) are enriched in basic residues. Disordered regions lie at residues 492 to 523 (MRGKERVRRKGMGKRRKGIDPMEDYGGSEDES) and 594 to 667 (KLQE…TVVA). A compositionally biased stretch (acidic residues) spans 512 to 523 (PMEDYGGSEDES). Basic and acidic residues-rich tracts occupy residues 608-618 (YDVKKEDKESK) and 656-667 (SLDRRGENTVVA).

In terms of tissue distribution, expressed in root tips, the shoot apical meristem (SAM), leaves, mature flowers and embryos.

The protein resides in the nucleus. In terms of biological role, maybe required to maintain cell division activity in meristematic cells. This chain is Protein MAIN-LIKE 2, found in Arabidopsis thaliana (Mouse-ear cress).